The chain runs to 606 residues: V-type proton ATPase catalytic subunit A (606 aa).

Residue Ala-2 is modified to N-acetylalanine. 240-247 serves as a coordination point for ATP; it reads AFGCGKTV.

Belongs to the ATPase alpha/beta chains family. V-ATPase is a heteromultimeric enzyme made up of two complexes: the ATP-hydrolytic V1 complex and the proton translocation V0 complex. The V1 complex consists of three catalytic AB heterodimers that form a heterohexamer, three peripheral stalks each consisting of EG heterodimers, one central rotor including subunits D and F, and the regulatory subunits C and H. The proton translocation complex V0 consists of the proton transport subunit a, a ring of proteolipid subunits c9c'', rotary subunit d, subunits e and f, and the accessory subunits vah-19/Ac45 and vah-20/PRR. Expressed in proximal but not distal germ cells.

It catalyses the reaction ATP + H2O + 4 H(+)(in) = ADP + phosphate + 5 H(+)(out). With respect to regulation, ATP hydrolysis occurs at the interface between the nucleotide-binding domains of subunits A and B. ATP hydrolysis triggers a conformational change in the subunits D and F, which induces a shift of subunit d. The c-ring is subsequently rotated and results in a continuous proton translocation across the membrane. Functionally, catalytic subunit of the V1 complex of vacuolar(H+)-ATPase (V-ATPase), a multisubunit enzyme composed of a peripheral complex (V1) that hydrolyzes ATP and a membrane integral complex (V0) that translocates protons. V-ATPase is responsible for acidifying and maintaining the pH of intracellular compartments and in some cell types, is targeted to the plasma membrane, where it is responsible for acidifying the extracellular environment. Required along with other vacuolar ATPase components for the removal of protein aggregates which form in immature oocytes in the distal gonad. This removal occurs as the oocytes mature and move to the proximal gonad, is triggered by the introduction of sperm through mating and occurs before fertilization. The introduction of sperm triggers V-ATPase accumulation in proximal oocytes and induces lysosomal acidification which leads to engulfing of protein aggregates by lysosomes and subsequent clearance of the aggregates. Lysosomal acidification also leads to changes in mitochondrial morphology and function. Mitochondria in distal immature oocytes are fragmented, produce high levels of reactive oxygen species (ROS) and have high membrane potential, indicative of metabolic inactivity. In contrast, mitochondria in proximal mature oocytes are tubular with lower ROS levels and membrane potential, indicative of an active metabolic state required for aggregate mobilization before clearance. Involved in receptor-mediated endocytosis. This chain is V-type proton ATPase catalytic subunit A, found in Caenorhabditis elegans.